Consider the following 396-residue polypeptide: NADH-quinone oxidoreductase subunit D (396 aa).

This sequence belongs to the complex I 49 kDa subunit family. In terms of assembly, NDH-1 is composed of 14 different subunits. Subunits NuoB, C, D, E, F, and G constitute the peripheral sector of the complex.

The protein localises to the cell inner membrane. It catalyses the reaction a quinone + NADH + 5 H(+)(in) = a quinol + NAD(+) + 4 H(+)(out). In terms of biological role, NDH-1 shuttles electrons from NADH, via FMN and iron-sulfur (Fe-S) centers, to quinones in the respiratory chain. The immediate electron acceptor for the enzyme in this species is believed to be ubiquinone. Couples the redox reaction to proton translocation (for every two electrons transferred, four hydrogen ions are translocated across the cytoplasmic membrane), and thus conserves the redox energy in a proton gradient. The polypeptide is NADH-quinone oxidoreductase subunit D (Brucella canis (strain ATCC 23365 / NCTC 10854 / RM-666)).